The following is a 248-amino-acid chain: MADS-box transcription factor 8 (248 aa).

The 61-residue stretch at 1-61 folds into the MADS-box domain; the sequence is MGRGRVELKR…GKLYEFCSGQ (61 aa). One can recognise a K-box domain in the interval 90–180; it reads VQSSRNEYLK…RRKLEESNQL (91 aa).

As to quaternary structure, may interact with the K-box of MADS6 and MADS16. May interact with MADS13 and MADS18. Binds to FCA. In terms of tissue distribution, expressed in lodicules, stamens and carpels.

The protein resides in the nucleus. Its function is as follows. Probable transcription factor. May be involved in the control of flowering time. The chain is MADS-box transcription factor 8 (MADS8) from Oryza sativa subsp. japonica (Rice).